A 354-amino-acid polypeptide reads, in one-letter code: UDP-3-O-acylglucosamine N-acyltransferase (354 aa).

The active-site Proton acceptor is His-250.

The protein belongs to the transferase hexapeptide repeat family. LpxD subfamily. As to quaternary structure, homotrimer.

It carries out the reaction a UDP-3-O-[(3R)-3-hydroxyacyl]-alpha-D-glucosamine + a (3R)-hydroxyacyl-[ACP] = a UDP-2-N,3-O-bis[(3R)-3-hydroxyacyl]-alpha-D-glucosamine + holo-[ACP] + H(+). It participates in bacterial outer membrane biogenesis; LPS lipid A biosynthesis. Its function is as follows. Catalyzes the N-acylation of UDP-3-O-acylglucosamine using 3-hydroxyacyl-ACP as the acyl donor. Is involved in the biosynthesis of lipid A, a phosphorylated glycolipid that anchors the lipopolysaccharide to the outer membrane of the cell. The polypeptide is UDP-3-O-acylglucosamine N-acyltransferase (Methylococcus capsulatus (strain ATCC 33009 / NCIMB 11132 / Bath)).